We begin with the raw amino-acid sequence, 103 residues long: Small ribosomal subunit protein uS10 (103 aa).

This sequence belongs to the universal ribosomal protein uS10 family. Part of the 30S ribosomal subunit.

In terms of biological role, involved in the binding of tRNA to the ribosomes. The polypeptide is Small ribosomal subunit protein uS10 (Aromatoleum aromaticum (strain DSM 19018 / LMG 30748 / EbN1) (Azoarcus sp. (strain EbN1))).